A 420-amino-acid chain; its full sequence is WD repeat-containing protein jip5 (420 aa).

WD repeat units follow at residues P9–D48, R72–K111, D117–S158, V221–E262, G271–E314, and D318–V355. The disordered stretch occupies residues R39–H63. The interval D350–D420 is disordered. A compositionally biased stretch (acidic residues) spans D368–D387. Basic residues predominate over residues D394–K406.

Belongs to the WD repeat WDR55 family.

Its subcellular location is the nucleus. It localises to the nucleolus. This chain is WD repeat-containing protein jip5 (jip5), found in Aspergillus terreus (strain NIH 2624 / FGSC A1156).